A 418-amino-acid polypeptide reads, in one-letter code: Tyrosine--tRNA ligase (418 aa).

Residue Tyr-34 participates in L-tyrosine binding. The short motif at 39 to 48 (PTADSLHLGH) is the 'HIGH' region element. L-tyrosine-binding residues include Tyr-169 and Gln-173. Positions 229-233 (KFGKS) match the 'KMSKS' region motif. Position 232 (Lys-232) interacts with ATP. The S4 RNA-binding domain maps to 352-418 (NNIVELLVSS…GKKKYFVLTY (67 aa)).

This sequence belongs to the class-I aminoacyl-tRNA synthetase family. TyrS type 1 subfamily. In terms of assembly, homodimer.

The protein localises to the cytoplasm. The enzyme catalyses tRNA(Tyr) + L-tyrosine + ATP = L-tyrosyl-tRNA(Tyr) + AMP + diphosphate + H(+). Its function is as follows. Catalyzes the attachment of tyrosine to tRNA(Tyr) in a two-step reaction: tyrosine is first activated by ATP to form Tyr-AMP and then transferred to the acceptor end of tRNA(Tyr). The sequence is that of Tyrosine--tRNA ligase from Streptococcus pneumoniae (strain ATCC BAA-255 / R6).